The chain runs to 557 residues: Selenoprotein N (557 aa).

Residues 1-21 (MAADVDKTPAGEQKDDHEDRG) are compositionally biased toward basic and acidic residues. The interval 1 to 28 (MAADVDKTPAGEQKDDHEDRGTPSSRRG) is disordered. A helical transmembrane segment spans residues 35 to 55 (ISSLFIIAAIPVIGVCIKYYL). A non-standard amino acid (selenocysteine) is located at residue selenocysteine 430. N-linked (GlcNAc...) asparagine glycosylation is found at asparagine 451 and asparagine 499.

In terms of assembly, interacts with ryr3.

It localises to the endoplasmic reticulum membrane. Plays an important role in cell protection against oxidative stress and in the regulation of redox-related calcium homeostasis. Regulates the calcium level of the ER by protecting the calcium pump ATP2A2 against the oxidoreductase ERO1A-mediated oxidative damage. Acts as a modulator of ryanodine receptor (RyR) activity: protects RyR from oxidation due to increased oxidative stress, or directly controls the RyR redox state, regulating the RyR-mediated calcium mobilization required for normal muscle development and differentiation. Plays an important role in muscle development and differentiation during early development. Required for development of the slow muscle fiber lineage. Required for the correct organization and attachment of the myofibrils, as well as for the continuity and integrity of the connective tissue that forms the myoseptum. The polypeptide is Selenoprotein N (Danio rerio (Zebrafish)).